The chain runs to 230 residues: 5'-methylthioadenosine/S-adenosylhomocysteine nucleosidase (230 aa).

The active-site Proton acceptor is E12. Substrate contacts are provided by residues G78, M153, and 174–175; that span reads ME. The active-site Proton donor is D198.

It belongs to the PNP/UDP phosphorylase family. MtnN subfamily.

It catalyses the reaction S-adenosyl-L-homocysteine + H2O = S-(5-deoxy-D-ribos-5-yl)-L-homocysteine + adenine. The enzyme catalyses S-methyl-5'-thioadenosine + H2O = 5-(methylsulfanyl)-D-ribose + adenine. It carries out the reaction 5'-deoxyadenosine + H2O = 5-deoxy-D-ribose + adenine. Its pathway is amino-acid biosynthesis; L-methionine biosynthesis via salvage pathway; S-methyl-5-thio-alpha-D-ribose 1-phosphate from S-methyl-5'-thioadenosine (hydrolase route): step 1/2. In terms of biological role, catalyzes the irreversible cleavage of the glycosidic bond in both 5'-methylthioadenosine (MTA) and S-adenosylhomocysteine (SAH/AdoHcy) to adenine and the corresponding thioribose, 5'-methylthioribose and S-ribosylhomocysteine, respectively. Also cleaves 5'-deoxyadenosine, a toxic by-product of radical S-adenosylmethionine (SAM) enzymes, into 5-deoxyribose and adenine. The chain is 5'-methylthioadenosine/S-adenosylhomocysteine nucleosidase from Lysinibacillus sphaericus (strain C3-41).